Consider the following 414-residue polypeptide: Glucose-1-phosphate adenylyltransferase (414 aa).

Residues glycine 164, 181–182 (EK), and serine 199 each bind alpha-D-glucose 1-phosphate.

It belongs to the bacterial/plant glucose-1-phosphate adenylyltransferase family. In terms of assembly, homotetramer.

It catalyses the reaction alpha-D-glucose 1-phosphate + ATP + H(+) = ADP-alpha-D-glucose + diphosphate. It participates in glycan biosynthesis; glycogen biosynthesis. In terms of biological role, involved in the biosynthesis of ADP-glucose, a building block required for the elongation reactions to produce glycogen. Catalyzes the reaction between ATP and alpha-D-glucose 1-phosphate (G1P) to produce pyrophosphate and ADP-Glc. This Kocuria rhizophila (strain ATCC 9341 / DSM 348 / NBRC 103217 / DC2201) protein is Glucose-1-phosphate adenylyltransferase.